Here is a 680-residue protein sequence, read N- to C-terminus: uncharacterized protein (680 aa).

It belongs to the HyuA family.

This is an uncharacterized protein from Methanocaldococcus jannaschii (strain ATCC 43067 / DSM 2661 / JAL-1 / JCM 10045 / NBRC 100440) (Methanococcus jannaschii).